A 215-amino-acid polypeptide reads, in one-letter code: Outer-membrane lipoprotein LolB (215 aa).

Positions 1 to 21 (MLIPKKYYLLIILLSNCLLAS) are cleaved as a signal peptide. A lipid anchor (N-palmitoyl cysteine) is attached at Cys-22. Cys-22 carries S-diacylglycerol cysteine lipidation.

It belongs to the LolB family. Monomer.

It is found in the cell outer membrane. Plays a critical role in the incorporation of lipoproteins in the outer membrane after they are released by the LolA protein. In Baumannia cicadellinicola subsp. Homalodisca coagulata, this protein is Outer-membrane lipoprotein LolB.